We begin with the raw amino-acid sequence, 202 residues long: ATP-dependent Clp protease proteolytic subunit (202 aa).

Ser101 serves as the catalytic Nucleophile. The active site involves His126.

It belongs to the peptidase S14 family. Component of the chloroplastic Clp protease core complex.

The protein localises to the plastid. The protein resides in the chloroplast stroma. It carries out the reaction Hydrolysis of proteins to small peptides in the presence of ATP and magnesium. alpha-casein is the usual test substrate. In the absence of ATP, only oligopeptides shorter than five residues are hydrolyzed (such as succinyl-Leu-Tyr-|-NHMec, and Leu-Tyr-Leu-|-Tyr-Trp, in which cleavage of the -Tyr-|-Leu- and -Tyr-|-Trp bonds also occurs).. In terms of biological role, cleaves peptides in various proteins in a process that requires ATP hydrolysis. Has a chymotrypsin-like activity. Plays a major role in the degradation of misfolded proteins. In Calycanthus floridus var. glaucus (Eastern sweetshrub), this protein is ATP-dependent Clp protease proteolytic subunit.